The sequence spans 539 residues: Alpha-aminoadipic semialdehyde dehydrogenase (539 aa).

The transit peptide at 1–26 (MLRLARPLCVQTVKASKLSRLWSRPA) directs the protein to the mitochondrion. Residues K86, K94, and K97 each carry the N6-acetyllysine; alternate modification. K86, K94, and K97 each carry N6-succinyllysine; alternate. Residues 192–194 (TAF), K218, 258–259 (GT), 274–275 (GS), 274–279 (GSTQVG), and 296–297 (EL) contribute to the NAD(+) site. Catalysis depends on E296, which acts as the Proton acceptor. C330 acts as the Nucleophile in catalysis. T331 is a (S)-2-amino-6-oxohexanoate binding site. E427 lines the NAD(+) pocket. An N6-acetyllysine modification is found at K462. Residues G489 and A490 each coordinate (S)-2-amino-6-oxohexanoate. K500 carries the post-translational modification N6-acetyllysine. Residue K537 is modified to N6-succinyllysine.

The protein belongs to the aldehyde dehydrogenase family. As to quaternary structure, homotetramer. In terms of tissue distribution, abundant in kidney, liver, cochlea and outer hair cells but not inner hair cells or vestibular type I hair cells. Very low levels in lung, brain, intestine and pancreas.

The protein resides in the cytoplasm. The protein localises to the cytosol. It localises to the nucleus. Its subcellular location is the mitochondrion. It carries out the reaction nonanal + NAD(+) + H2O = nonanoate + NADH + 2 H(+). The catalysed reaction is (S)-2-amino-6-oxohexanoate + NAD(+) + H2O = L-2-aminoadipate + NADH + 2 H(+). It catalyses the reaction betaine aldehyde + NAD(+) + H2O = glycine betaine + NADH + 2 H(+). The enzyme catalyses an aldehyde + NAD(+) + H2O = a carboxylate + NADH + 2 H(+). It carries out the reaction hexanal + NAD(+) + H2O = hexanoate + NADH + 2 H(+). The catalysed reaction is octanal + NAD(+) + H2O = octanoate + NADH + 2 H(+). It catalyses the reaction (E)-non-2-enal + NAD(+) + H2O = (E)-non-2-enoate + NADH + 2 H(+). The enzyme catalyses (E)-4-hydroxynon-2-enal + NAD(+) + H2O = (E)-4-hydroxynon-2-enoate + NADH + 2 H(+). Its pathway is amine and polyamine biosynthesis; betaine biosynthesis via choline pathway; betaine from betaine aldehyde: step 1/1. In terms of biological role, multifunctional enzyme mediating important protective effects. Metabolizes betaine aldehyde to betaine, an important cellular osmolyte and methyl donor. Protects cells from oxidative stress by metabolizing a number of lipid peroxidation-derived aldehydes. Involved in lysine catabolism. In Rattus norvegicus (Rat), this protein is Alpha-aminoadipic semialdehyde dehydrogenase.